The primary structure comprises 713 residues: Undecaprenyl-diphosphooligosaccharide--protein glycotransferase (713 aa).

Topologically, residues 1 to 11 are cytoplasmic; the sequence is MLKKEYLKNPY. The helical transmembrane segment at 12-35 threads the bilayer; it reads LVLFAMIILAYVFSVLCRFYWIWW. At 36–96 the chain is on the periplasmic side; sequence ASEFNEYFFN…YWLYKITPFS (61 aa). The DXD motif 1 motif lies at 52-54; sequence SND. Asp54 contributes to the Mn(2+) binding site. A helical transmembrane segment spans residues 97–122; that stretch reads FESIILYMSTFLSSLVVIPIILLANE. Over 123–125 the chain is Cytoplasmic; it reads YKR. The chain crosses the membrane as a helical span at residues 126–144; the sequence is PLMGFVAALLASVANSYYN. Over 145–152 the chain is Periplasmic; it reads RTMSGYYD. A Mn(2+)-binding site is contributed by Asp152. The DXD motif 2 motif lies at 152–154; sequence DTD. The chain crosses the membrane as a helical span at residues 153–174; sequence TDMLVIVLPMFILFFMVRMILK. Residues 175-176 lie on the Cytoplasmic side of the membrane; it reads KD. The chain crosses the membrane as a helical span at residues 177-192; it reads FFSLIALPLFIGIYLW. The Periplasmic portion of the chain corresponds to 193–197; that stretch reads WYPSS. Residue 194–196 participates in [alpha-D-GalNAc-(1-&gt;4)]2-[beta-D-Glc-(1-&gt;3)]-[alpha-D-GalNAc-(1-&gt;4)]2-alpha-D-GalNAc-(1-&gt;3)-alpha-D-diNAcBac-tri-trans,hepta-cis-undecaprenyl diphosphate binding; that stretch reads YPS. A helical membrane pass occupies residues 198–215; that stretch reads YTLNVALIGLFLIYTLIF. Residues 216-220 lie on the Cytoplasmic side of the membrane; the sequence is HRKEK. The helical transmembrane segment at 221-233 threads the bilayer; the sequence is IFYIAVILSSLTL. At 234–237 the chain is on the periplasmic side; the sequence is SNIA. A helical membrane pass occupies residues 238-254; it reads WFYQSAIIVILFALFAL. At 255 to 260 the chain is on the cytoplasmic side; that stretch reads EQKRLN. The helical transmembrane segment at 261-278 threads the bilayer; sequence FMIIGILGSATLIFLILS. Over 279–324 the chain is Periplasmic; it reads GGVDPILYQLKFYIFRNDESANLTQGFMYFNVNQTIQEVENVDFSE. Tyr291 provides a ligand contact to [alpha-D-GalNAc-(1-&gt;4)]2-[beta-D-Glc-(1-&gt;3)]-[alpha-D-GalNAc-(1-&gt;4)]2-alpha-D-GalNAc-(1-&gt;3)-alpha-D-diNAcBac-tri-trans,hepta-cis-undecaprenyl diphosphate. A TIXE motif motif is present at residues 313-316; that stretch reads TIQE. Glu316 is a binding site for Mn(2+). A helical membrane pass occupies residues 325-347; that stretch reads FMRRISGSEIVFLFSLFGFVWLL. At 348–352 the chain is on the cytoplasmic side; sequence RKHKS. A helical transmembrane segment spans residues 353-369; it reads MIMALPILVLGFLALKG. Residues 370–373 are Periplasmic-facing; it reads GLRF. A [alpha-D-GalNAc-(1-&gt;4)]2-[beta-D-Glc-(1-&gt;3)]-[alpha-D-GalNAc-(1-&gt;4)]2-alpha-D-GalNAc-(1-&gt;3)-alpha-D-diNAcBac-tri-trans,hepta-cis-undecaprenyl diphosphate-binding site is contributed by Arg372. A helical transmembrane segment spans residues 374–396; that stretch reads TIYSVPVMALGFGFLLSEFKAIL. At 397 to 406 the chain is on the cytoplasmic side; that stretch reads VKKYSQLTSN. The chain crosses the membrane as a helical span at residues 407-427; the sequence is VCIVFATILTLAPVFIHIYNY. The Periplasmic portion of the chain corresponds to 428–713; that stretch reads KAPTVFSQNE…RDAKVFKLKI (286 aa). Residues 457–459 form an interacts with target acceptor peptide in protein substrate region; sequence WWD. Positions 457–461 match the WWDYG motif motif; it reads WWDYG. Position 462 (Tyr462) interacts with [alpha-D-GalNAc-(1-&gt;4)]2-[beta-D-Glc-(1-&gt;3)]-[alpha-D-GalNAc-(1-&gt;4)]2-alpha-D-GalNAc-(1-&gt;3)-alpha-D-diNAcBac-tri-trans,hepta-cis-undecaprenyl diphosphate. Asn534 carries an N-linked (DATDGlc) asparagine glycan. The MI motif motif lies at 568 to 575; it reads MSLIFSTV.

This sequence belongs to the STT3 family. It depends on Mg(2+) as a cofactor. Mn(2+) is required as a cofactor.

Its subcellular location is the cell inner membrane. The enzyme catalyses tritrans,heptacis-undecaprenyl diphosphooligosaccharide + [protein]-L-asparagine = tritrans,heptacis-undecaprenyl diphosphate + a glycoprotein with the oligosaccharide chain attached by N-beta-D-glycosyl linkage to protein L-asparagine.. Its pathway is protein modification; protein glycosylation. Its function is as follows. Oligosaccharyltransferase that catalyzes the transfer of a preassembled heptasaccharide from a lipid donor to an asparagine residue in nascent polypeptide chains, affording a beta-linked glycan to the asparagine side chain of target proteins. Functionally, oligosaccharyl transferase (OST) that catalyzes the initial transfer of a defined glycan (GalNAc(2)GlcGalNAc(3)Bac(NAc)(2) in eubacteria, where Bac(NAc)(2) is di-N-acetyl bacillosamine) from the lipid carrier undecaprenol-pyrophosphate to an asparagine residue within an Asp/Glu-Asn-X-Ser/Thr consensus motif in nascent polypeptide chains, the first step in protein N-glycosylation. This chain is Undecaprenyl-diphosphooligosaccharide--protein glycotransferase (pglB), found in Campylobacter jejuni (strain RM1221).